The chain runs to 661 residues: Transketolase (661 aa).

His-28 serves as a coordination point for substrate. Thiamine diphosphate is bound by residues His-68 and Gly-116–Leu-118. Residue Glu-157 coordinates Mg(2+). Thiamine diphosphate is bound by residues Gly-158 and Asn-187. Mg(2+)-binding residues include Asn-187 and Ile-189. The substrate site is built by His-261 and Arg-358. A thiamine diphosphate-binding site is contributed by His-261. The active-site Proton donor is Glu-412. Phe-438 contributes to the thiamine diphosphate binding site. Substrate-binding residues include His-462, Asp-470, and Arg-521.

The protein belongs to the transketolase family. In terms of assembly, homodimer. Mg(2+) serves as cofactor. It depends on Ca(2+) as a cofactor. Requires Mn(2+) as cofactor. Co(2+) is required as a cofactor. The cofactor is thiamine diphosphate.

It carries out the reaction D-sedoheptulose 7-phosphate + D-glyceraldehyde 3-phosphate = aldehydo-D-ribose 5-phosphate + D-xylulose 5-phosphate. Catalyzes the transfer of a two-carbon ketol group from a ketose donor to an aldose acceptor, via a covalent intermediate with the cofactor thiamine pyrophosphate. This is Transketolase (tkt) from Treponema pallidum (strain Nichols).